Reading from the N-terminus, the 370-residue chain is Ig heavy chain C region (370 aa).

Ig-like domains lie at 40–134, 145–237, and 247–347; these read PTVI…RNIT, PAIK…DSIH, and PSVS…RTVN. N-linked (GlcNAc...) asparagine glycosylation is found at asparagine 98, asparagine 132, asparagine 177, asparagine 343, asparagine 347, and asparagine 357.

In Heterodontus francisci (Horn shark), this protein is Ig heavy chain C region.